Reading from the N-terminus, the 470-residue chain is ATP synthase subunit beta (470 aa).

Residue Gly157 to Thr164 participates in ATP binding.

The protein belongs to the ATPase alpha/beta chains family. In terms of assembly, F-type ATPases have 2 components, CF(1) - the catalytic core - and CF(0) - the membrane proton channel. CF(1) has five subunits: alpha(3), beta(3), gamma(1), delta(1), epsilon(1). CF(0) has three main subunits: a(1), b(2) and c(9-12). The alpha and beta chains form an alternating ring which encloses part of the gamma chain. CF(1) is attached to CF(0) by a central stalk formed by the gamma and epsilon chains, while a peripheral stalk is formed by the delta and b chains.

It is found in the cell inner membrane. It carries out the reaction ATP + H2O + 4 H(+)(in) = ADP + phosphate + 5 H(+)(out). Its function is as follows. Produces ATP from ADP in the presence of a proton gradient across the membrane. The catalytic sites are hosted primarily by the beta subunits. This chain is ATP synthase subunit beta, found in Geobacter sp. (strain M21).